Here is a 219-residue protein sequence, read N- to C-terminus: 2-C-methyl-D-erythritol 4-phosphate cytidylyltransferase (219 aa).

Belongs to the IspD/TarI cytidylyltransferase family. IspD subfamily.

The enzyme catalyses 2-C-methyl-D-erythritol 4-phosphate + CTP + H(+) = 4-CDP-2-C-methyl-D-erythritol + diphosphate. It functions in the pathway isoprenoid biosynthesis; isopentenyl diphosphate biosynthesis via DXP pathway; isopentenyl diphosphate from 1-deoxy-D-xylulose 5-phosphate: step 2/6. Catalyzes the formation of 4-diphosphocytidyl-2-C-methyl-D-erythritol from CTP and 2-C-methyl-D-erythritol 4-phosphate (MEP). The chain is 2-C-methyl-D-erythritol 4-phosphate cytidylyltransferase from Chlamydia trachomatis serovar D (strain ATCC VR-885 / DSM 19411 / UW-3/Cx).